Consider the following 631-residue polypeptide: Leucine aminopeptidase 2-2 (631 aa).

Residues 140–142 and 265–270 contribute to the substrate site; these read QCQ and PYGGME. H294 contacts Zn(2+). E295 (proton acceptor) is an active-site residue. Residues H298 and E317 each coordinate Zn(2+). Residue Y395 is the Proton donor of the active site.

It belongs to the peptidase M1 family. It depends on Zn(2+) as a cofactor.

It localises to the cytoplasm. The protein resides in the nucleus. The catalysed reaction is an epoxide + H2O = an ethanediol. Functionally, aminopeptidase that preferentially cleaves di- and tripeptides. Also has low epoxide hydrolase activity (in vitro). Can hydrolyze the epoxide leukotriene LTA(4) but it forms preferentially 5,6-dihydroxy-7,9,11,14-eicosatetraenoic acid rather than the cytokine leukotriene B(4) as the product compared to the homologous mammalian enzyme (in vitro). The polypeptide is Leucine aminopeptidase 2-2 (Meyerozyma guilliermondii (strain ATCC 6260 / CBS 566 / DSM 6381 / JCM 1539 / NBRC 10279 / NRRL Y-324) (Yeast)).